The sequence spans 205 residues: Listeria nuclear targeted protein A (205 aa).

An N-terminal signal peptide occupies residues 1 to 36; the sequence is MKKLVAWFNGLSKMWKVVVIIGAVFVVIIALTTGED.

As to quaternary structure, interacts specifically with host BAHD1.

The protein resides in the secreted. Its subcellular location is the host nucleus. Its function is as follows. Relieves the repression of host cell immune response genes (interferon-stimulated genes) by blocking the recruitment of host BAHD1 to these genes. May modulate interferon-mediated immune response to control bacterial colonization of the host. The polypeptide is Listeria nuclear targeted protein A (lntA) (Listeria monocytogenes serovar 1/2a (strain ATCC BAA-679 / EGD-e)).